The chain runs to 67 residues: uncharacterized protein (67 aa).

It belongs to the baculoviridae 8 kDa protein family.

This is an uncharacterized protein from Autographa californica nuclear polyhedrosis virus (AcMNPV).